Here is a 200-residue protein sequence, read N- to C-terminus: dITP/XTP pyrophosphatase (200 aa).

8–13 (SQNSSK) contacts substrate. Mg(2+) is bound by residues E40 and D69. Catalysis depends on D69, which acts as the Proton acceptor. Substrate-binding positions include S70, 154-157 (FGYD), K177, and 182-183 (HR).

This sequence belongs to the HAM1 NTPase family. As to quaternary structure, homodimer. The cofactor is Mg(2+).

The catalysed reaction is XTP + H2O = XMP + diphosphate + H(+). It catalyses the reaction dITP + H2O = dIMP + diphosphate + H(+). The enzyme catalyses ITP + H2O = IMP + diphosphate + H(+). Functionally, pyrophosphatase that catalyzes the hydrolysis of nucleoside triphosphates to their monophosphate derivatives, with a high preference for the non-canonical purine nucleotides XTP (xanthosine triphosphate), dITP (deoxyinosine triphosphate) and ITP. Seems to function as a house-cleaning enzyme that removes non-canonical purine nucleotides from the nucleotide pool, thus preventing their incorporation into DNA/RNA and avoiding chromosomal lesions. The protein is dITP/XTP pyrophosphatase of Coxiella burnetii (strain RSA 493 / Nine Mile phase I).